Reading from the N-terminus, the 160-residue chain is SsrA-binding protein (160 aa).

The interval 1-23 is disordered; sequence MARKKKQDKGQGPKTIAQNRRAR.

It belongs to the SmpB family.

The protein resides in the cytoplasm. Functionally, required for rescue of stalled ribosomes mediated by trans-translation. Binds to transfer-messenger RNA (tmRNA), required for stable association of tmRNA with ribosomes. tmRNA and SmpB together mimic tRNA shape, replacing the anticodon stem-loop with SmpB. tmRNA is encoded by the ssrA gene; the 2 termini fold to resemble tRNA(Ala) and it encodes a 'tag peptide', a short internal open reading frame. During trans-translation Ala-aminoacylated tmRNA acts like a tRNA, entering the A-site of stalled ribosomes, displacing the stalled mRNA. The ribosome then switches to translate the ORF on the tmRNA; the nascent peptide is terminated with the 'tag peptide' encoded by the tmRNA and targeted for degradation. The ribosome is freed to recommence translation, which seems to be the essential function of trans-translation. The sequence is that of SsrA-binding protein from Thermobifida fusca (strain YX).